The chain runs to 445 residues: Phosphoglucosamine mutase (445 aa).

Ser99 (phosphoserine intermediate) is an active-site residue. Ser99, Asp242, Asp244, and Asp246 together coordinate Mg(2+). Ser99 carries the phosphoserine modification.

Belongs to the phosphohexose mutase family. It depends on Mg(2+) as a cofactor. Post-translationally, activated by phosphorylation.

The catalysed reaction is alpha-D-glucosamine 1-phosphate = D-glucosamine 6-phosphate. Functionally, catalyzes the conversion of glucosamine-6-phosphate to glucosamine-1-phosphate. This is Phosphoglucosamine mutase from Campylobacter jejuni (strain RM1221).